Here is a 153-residue protein sequence, read N- to C-terminus: Small ribosomal subunit protein uS13 (153 aa).

A disordered region spans residues 132 to 153; that stretch reads VRGQRTRSHHRKGRTVGVIKKK. Over residues 135-153 the composition is skewed to basic residues; that stretch reads QRTRSHHRKGRTVGVIKKK.

The protein belongs to the universal ribosomal protein uS13 family. In terms of assembly, part of the 30S ribosomal subunit. Forms a loose heterodimer with protein S19. Forms two bridges to the 50S subunit in the 70S ribosome.

Functionally, located at the top of the head of the 30S subunit, it contacts several helices of the 16S rRNA. In the 70S ribosome it contacts the 23S rRNA (bridge B1a) and protein L5 of the 50S subunit (bridge B1b), connecting the 2 subunits; these bridges are implicated in subunit movement. The polypeptide is Small ribosomal subunit protein uS13 (Nanoarchaeum equitans (strain Kin4-M)).